A 150-amino-acid polypeptide reads, in one-letter code: UPF0756 membrane protein plu2726 (150 aa).

A run of 4 helical transmembrane segments spans residues 8–28 (LLVLLVLAALGIISHNMTVTL), 51–71 (YGLTIGVLILTVGVMAPIASG), 88–108 (LLAIVIGVLVSWLGSRGVSLM), and 123–143 (VLGVALFKGVPVGPLIAAGIL).

Belongs to the UPF0756 family.

It localises to the cell membrane. The chain is UPF0756 membrane protein plu2726 from Photorhabdus laumondii subsp. laumondii (strain DSM 15139 / CIP 105565 / TT01) (Photorhabdus luminescens subsp. laumondii).